A 326-amino-acid chain; its full sequence is Tagatose 1,6-diphosphate aldolase (326 aa).

Belongs to the aldolase LacD family.

The catalysed reaction is D-tagatofuranose 1,6-bisphosphate = D-glyceraldehyde 3-phosphate + dihydroxyacetone phosphate. It participates in carbohydrate metabolism; D-tagatose 6-phosphate degradation; D-glyceraldehyde 3-phosphate and glycerone phosphate from D-tagatose 6-phosphate: step 2/2. In Streptococcus pneumoniae serotype 4 (strain ATCC BAA-334 / TIGR4), this protein is Tagatose 1,6-diphosphate aldolase.